The chain runs to 473 residues: MIINFLLNSIVGTVKLDENPNINLKNNINNNDNNKENSIEINDYLQTLVKEEDFKNQHTDPNFKFLALRSTKVPIDEYNPENYQLKFVQIITRHGRRTPESKRYPLTMWTCNSLDQLITNKDTSRPDCNMGQLTVLGIVDQINVGKAYRNLFINNLHFLDNKYNKDQIFIRSSNRERTISSARSFMHGLYGGSFADDQEKSPNHSSFLILDEKDENMYPRSSPKYNFLKGLLKKHKAVIEENEKSNLKEFTEKIKNIFEDSKFDTAFYVPSWRSYAGLVNSFDCFRNNGLPLPKGFTNDVIQRMYEESAKEFKSARLFPEMSILGIGRFVNDLTKQMYLKSVNDPSVKDLKLSLYSGHDTTLAALLVAYDMYEDNVHPVTSSALEYLLFQDKNYKEPEVVTKSNEKELINHQYVKVIFNHKPIHIGPCKDKEVDGMCPLSEFLKISQSIIPTNYDEQSKITDEEKNKYIQEST.

Catalysis depends on H94, which acts as the Nucleophile. D359 functions as the Proton donor in the catalytic mechanism.

It belongs to the histidine acid phosphatase family.

The catalysed reaction is a phosphate monoester + H2O = an alcohol + phosphate. The chain is Probable acid phosphatase DDB_G0284755 from Dictyostelium discoideum (Social amoeba).